The sequence spans 271 residues: Phosphate import ATP-binding protein PstB (271 aa).

The 242-residue stretch at 25 to 266 (FDTKNLNLWY…PSDKRTEDYI (242 aa)) folds into the ABC transporter domain. 57 to 64 (GPSGCGKS) is a binding site for ATP.

It belongs to the ABC transporter superfamily. Phosphate importer (TC 3.A.1.7) family. In terms of assembly, the complex is composed of two ATP-binding proteins (PstB), two transmembrane proteins (PstC and PstA) and a solute-binding protein (PstS).

The protein resides in the cell membrane. It catalyses the reaction phosphate(out) + ATP + H2O = ADP + 2 phosphate(in) + H(+). Part of the ABC transporter complex PstSACB involved in phosphate import. Responsible for energy coupling to the transport system. This Bacillus anthracis protein is Phosphate import ATP-binding protein PstB.